A 71-amino-acid polypeptide reads, in one-letter code: Small ribosomal subunit protein bS18 (71 aa).

The protein belongs to the bacterial ribosomal protein bS18 family. As to quaternary structure, part of the 30S ribosomal subunit. Forms a tight heterodimer with protein bS6.

Functionally, binds as a heterodimer with protein bS6 to the central domain of the 16S rRNA, where it helps stabilize the platform of the 30S subunit. This is Small ribosomal subunit protein bS18 from Synechococcus elongatus (strain ATCC 33912 / PCC 7942 / FACHB-805) (Anacystis nidulans R2).